The sequence spans 402 residues: Aminotransferase-like protein FGM3 (402 aa).

Pyridoxal 5'-phosphate-binding positions include 137–138, aspartate 218, and 282–283; these read TI and FG.

Belongs to the class-V pyridoxal-phosphate-dependent aminotransferase family. Csd subfamily.

Functionally, aminotransferase-like protein; part of the Fg3_54/C64 gene cluster that mediates the biosynthesis of the octapeptide fusaoctaxin A, a virulence factor that is required for cell-to-cell invasiveness of plant host. The 2 nonribosomal peptide synthetases NRPS9 and NRPS5 form an assembly line which likely utilizes GABA as a starter unit (loaded on the unique module M1 of NRPS9) and sequentially incorporates seven extender units composed of the residues L-Ala, L-allo-Ile, L-Ser, L-Val, L-Ser, L-Leu and L-Leu, respectively. During the process, each of the residues that are tethered on modules M3-M7 of NRPS5 containing an E domain can undergo an epimerization reaction to produce a D-configuration before the transpeptidation reaction occurs. The elongation of the peptidyl chain might be terminated by module M8-mediated L-Leu incorporation, followed by R domain-catalyzed 4 electron reduction to release the resulting octapeptide from the assembly line as an alcohol. Fusaoctaxin A is cleaved by the cluster specific ABC transporter FGM5 to the pentapeptide fusapentaxin A and the tripeptide fusatrixin A. The other enzymes from the cluster, FGM1, FGM2, FGM3 and FGM9 seem not to be involved in the biosynthesis of fusaoctaxin A and their functions have still to be determined. The protein is Aminotransferase-like protein FGM3 of Gibberella zeae (strain ATCC MYA-4620 / CBS 123657 / FGSC 9075 / NRRL 31084 / PH-1) (Wheat head blight fungus).